The primary structure comprises 145 residues: Transcription factor MEE8 (145 aa).

The segment covering 33–49 (EKGVEKVGQKRSAESRR) has biased composition (basic and acidic residues). The tract at residues 33 to 61 (EKGVEKVGQKRSAESRREGKKKRVKTQCV) is disordered. The region spanning 66–115 (DKSDHDTLLKKKRRERIRRQLETLKEITPNCPQSDINAILDCVIEYTNNL) is the bHLH domain.

In terms of assembly, homodimer.

It localises to the nucleus. In terms of biological role, required during early embryo development, for the endosperm formation. This chain is Transcription factor MEE8 (MEE8), found in Arabidopsis thaliana (Mouse-ear cress).